The following is a 570-amino-acid chain: uncharacterized protein (570 aa).

Over residues 1 to 15 the composition is skewed to low complexity; that stretch reads MTESIISSRTASISS. Residues 1 to 34 are disordered; the sequence is MTESIISSRTASISSKEGYEIRQGSTDSSSLDLE. Ser14 is modified (phosphoserine). A run of 12 helical transmembrane segments spans residues 96–116, 141–161, 163–183, 198–218, 229–249, 261–281, 328–348, 369–389, 397–417, 423–443, 457–477, and 485–505; these read WKLY…LFIG, NLNT…HYIM, TFPL…IVFL, FFLG…MGMF, PVFW…AYGL, LFMI…FFYY, PITW…NLAY, VALA…MYLI, AMFW…LPWS, LATM…LGWT, GLMF…LWQS, and PAWI…YLVA.

The protein belongs to the major facilitator superfamily. Allantoate permease family.

The protein resides in the endoplasmic reticulum. It is found in the membrane. This is an uncharacterized protein from Schizosaccharomyces pombe (strain 972 / ATCC 24843) (Fission yeast).